Reading from the N-terminus, the 331-residue chain is Cathepsin S (331 aa).

Positions 1–16 (MKWLVGLLPLCSYAVA) are cleaved as a signal peptide. The propeptide at 17 to 114 (QVHKDPTLDH…VTYRSNSNQK (98 aa)) is activation peptide. N104 carries an N-linked (GlcNAc...) asparagine glycan. Cystine bridges form between C126/C224, C136/C180, C170/C213, and C272/C320. Residue C139 is part of the active site. Active-site residues include H278 and N298.

This sequence belongs to the peptidase C1 family.

The protein resides in the lysosome. It localises to the secreted. The protein localises to the cytoplasmic vesicle. It is found in the phagosome. It catalyses the reaction Similar to cathepsin L, but with much less activity on Z-Phe-Arg-|-NHMec, and more activity on the Z-Val-Val-Arg-|-Xaa compound.. In terms of biological role, thiol protease. Key protease responsible for the removal of the invariant chain from MHC class II molecules and MHC class II antigen presentation. The bond-specificity of this proteinase is in part similar to the specificities of cathepsin L. The polypeptide is Cathepsin S (CTSS) (Canis lupus familiaris (Dog)).